We begin with the raw amino-acid sequence, 423 residues long: Glutamyl-tRNA reductase (423 aa).

Substrate contacts are provided by residues 51 to 54 (TCNR), serine 99, 104 to 106 (EDQ), and glutamine 110. The Nucleophile role is filled by cysteine 52. 179 to 184 (GSGEMG) serves as a coordination point for NADP(+).

This sequence belongs to the glutamyl-tRNA reductase family. In terms of assembly, homodimer.

The enzyme catalyses (S)-4-amino-5-oxopentanoate + tRNA(Glu) + NADP(+) = L-glutamyl-tRNA(Glu) + NADPH + H(+). It functions in the pathway porphyrin-containing compound metabolism; protoporphyrin-IX biosynthesis; 5-aminolevulinate from L-glutamyl-tRNA(Glu): step 1/2. In terms of biological role, catalyzes the NADPH-dependent reduction of glutamyl-tRNA(Glu) to glutamate 1-semialdehyde (GSA). This is Glutamyl-tRNA reductase from Methanoculleus marisnigri (strain ATCC 35101 / DSM 1498 / JR1).